The chain runs to 414 residues: Arrestin domain-containing protein 3 (414 aa).

2 consecutive short sequence motifs (PPxY motif) follow at residues 346-349 and 391-394; these read PPSY and PPLY. The tract at residues 393–414 is disordered; it reads LYSEIDPNPDQSADDRPSCPSR. Basic and acidic residues predominate over residues 405 to 414; that stretch reads ADDRPSCPSR.

The protein belongs to the arrestin family. In terms of assembly, interacts (via PPxY motifs) with NEDD4 (via WW domains). Interacts with ADRB2. Interacts with ADRB3. Interacts with HGS (via PPxY motifs). Does not bind TXN (thioredoxin). Interacts with ITCH.

The protein resides in the cytoplasm. It localises to the cell membrane. The protein localises to the lysosome. It is found in the endosome. Its subcellular location is the early endosome. In terms of biological role, adapter protein that plays a role in regulating cell-surface expression of adrenergic receptors and probably also other G protein-coupled receptors. Plays a role in NEDD4-mediated ubiquitination and endocytosis af activated ADRB2 and subsequent ADRB2 degradation. May recruit NEDD4 to ADRB2. Alternatively, may function as adapter protein that does not play a major role in recruiting NEDD4 to ADRB2, but rather plays a role in a targeting ADRB2 to endosomes. This is Arrestin domain-containing protein 3 (ARRDC3) from Pongo abelii (Sumatran orangutan).